A 397-amino-acid chain; its full sequence is Lysophospholipid transporter LplT (397 aa).

Residues 1–17 are Periplasmic-facing; sequence MSESVHTNTSLWSKGMK. The helical transmembrane segment at 18 to 38 threads the bilayer; sequence AVIVAQFLSAFGDNALLFATL. Topologically, residues 39–52 are cytoplasmic; that stretch reads ALLKAQFYPEWSQP. A helical membrane pass occupies residues 53–73; sequence ILQMVFVGAYILFAPFVGQVA. At 74-90 the chain is on the periplasmic side; it reads DSFAKGRVMMFANGLKL. The helical transmembrane segment at 91-111 threads the bilayer; that stretch reads LGAASICFGINPFLGYTLVGV. Over 112-144 the chain is Cytoplasmic; that stretch reads GAAAYSPAKYGILGELTTGSKLVKANGLMEAST. A helical membrane pass occupies residues 145–165; that stretch reads IAAILLGSVAGGVLADWHVLV. Position 166 (Ala166) is a topological domain, periplasmic. The chain crosses the membrane as a helical span at residues 167 to 187; sequence LAACALAYGGAVVANIYIPKL. Residues 188–226 lie on the Cytoplasmic side of the membrane; the sequence is AAARPGQSWNLINMTRSFLNACTSLWRNGETRFSLVGTS. A helical membrane pass occupies residues 227–247; that stretch reads LFWGAGVTLRFLLVLWVPVAL. Residues 248 to 256 are Periplasmic-facing; the sequence is GITDNATPT. Residues 257 to 277 traverse the membrane as a helical segment; sequence YLNAMVAIGIVVGAGAAAKLV. Residues 278-280 are Cytoplasmic-facing; that stretch reads TLE. A helical membrane pass occupies residues 281-301; that stretch reads TVSRCMPAGILIGVVVLIFSL. Residues 302-304 are Periplasmic-facing; sequence QHE. A helical transmembrane segment spans residues 305–325; it reads LLPAYALLMLIGVMGGFFVVP. The Cytoplasmic segment spans residues 326–343; that stretch reads LNALLQERGKKSVGAGNA. The helical transmembrane segment at 344–364 threads the bilayer; sequence IAVQNLGENSAMLLMLGIYSL. The Periplasmic segment spans residues 365–366; the sequence is AV. A helical membrane pass occupies residues 367–387; it reads MVGIPVVPIGIGFGALFALAI. At 388 to 397 the chain is on the cytoplasmic side; that stretch reads TALWIWQRRH.

The protein belongs to the major facilitator superfamily. LplT (TC 2.A.1.42) family.

Its subcellular location is the cell inner membrane. Catalyzes the facilitated diffusion of 2-acyl-glycero-3-phosphoethanolamine (2-acyl-GPE) into the cell. The protein is Lysophospholipid transporter LplT of Escherichia coli (strain ATCC 8739 / DSM 1576 / NBRC 3972 / NCIMB 8545 / WDCM 00012 / Crooks).